The primary structure comprises 231 residues: MTAQRRQAPIASRETLQALLSEGAEALGVALSDAQRGALLDYVALLAKWNAVYNLTAIRDPRQMLIQHILDSLSIVPHLGARGAAATALDVGSGGGLPGIVLAIALPGWQVTLNDIVQKKSAFQNQAKAELKLGNLSVVTGRVETLRPGADVQGKFDVIVSRAFADLADFVTLARHLVAPGGSIWAMKGVRPDEEIGRLPDGARVKQMIRLTVPSLDAERHLIEVELDEAI.

S-adenosyl-L-methionine is bound by residues glycine 92, leucine 97, 143-144, and arginine 162; that span reads VE.

Belongs to the methyltransferase superfamily. RNA methyltransferase RsmG family.

Its subcellular location is the cytoplasm. It carries out the reaction guanosine(527) in 16S rRNA + S-adenosyl-L-methionine = N(7)-methylguanosine(527) in 16S rRNA + S-adenosyl-L-homocysteine. Its function is as follows. Specifically methylates the N7 position of guanine in position 527 of 16S rRNA. The sequence is that of Ribosomal RNA small subunit methyltransferase G from Burkholderia thailandensis (strain ATCC 700388 / DSM 13276 / CCUG 48851 / CIP 106301 / E264).